We begin with the raw amino-acid sequence, 807 residues long: Maternal DNA replication licensing factor mcm3 (807 aa).

An MCM domain is found at 295 to 502 (IFEHLSKSLA…NDQEIADHVL (208 aa)). 345 to 352 (GDPSVAKS) is a binding site for ATP. The Arginine finger signature appears at 477–480 (SRFD). Positions 664–673 (KTDKDLHDEN) are enriched in basic and acidic residues. Residues 664 to 741 (KTDKDLHDEN…QDGKRSLSQN (78 aa)) form a disordered region. Over residues 707–723 (FSEQDSSLNENLSQSLR) the composition is skewed to polar residues. The segment covering 727-741 (KKAESQDGKRSLSQN) has biased composition (basic and acidic residues).

Belongs to the MCM family. Component of the mcm2-7 complex (RLF-M). The complex forms a toroidal hexameric ring with the proposed subunit order mcm2-mcm6-mcm4-mcm7-mcm3-mcm5. The heterodimer of mmcm3/mcm5 interacts with mcm4, mmcm6, mcm7 and weakly with mcm2. Interacts with mcm7, though this interaction may not be direct, and remains in a complex with mcm7 throughout the cell cycle. Component of the CMG helicase complex, composed of the mcm2-7 complex, the GINS complex and cdc45.

Its subcellular location is the nucleus. The protein resides in the chromosome. The catalysed reaction is ATP + H2O = ADP + phosphate + H(+). Functionally, acts as a component of the mcm2-7 complex (mcm complex) which is the putative replicative helicase essential for 'once per cell cycle' DNA replication initiation and elongation in eukaryotic cells. The active ATPase sites in the mcm2-7 ring are formed through the interaction surfaces of two neighboring subunits such that a critical structure of a conserved arginine finger motif is provided in trans relative to the ATP-binding site of the Walker A box of the adjacent subunit. The six ATPase active sites, however, are likely to contribute differentially to the complex helicase activity. The existence of maternal and zygotic forms of mcm3 and mcm6 suggests that specific forms of mcm2-7 complexes may be used during different stages of development. The polypeptide is Maternal DNA replication licensing factor mcm3 (mmcm3) (Xenopus laevis (African clawed frog)).